The primary structure comprises 355 residues: Protein-glutamate methylesterase/protein-glutamine glutaminase 3 (355 aa).

The Response regulatory domain occupies 8–123 (SVLIVDDSGM…AREVEDFVDK (116 aa)). Residue aspartate 59 is modified to 4-aspartylphosphate. Positions 139–161 (RSAPAAGPTPVPQAPPPPAAPPA) are disordered. Residues 145 to 159 (GPTPVPQAPPPPAAP) show a composition bias toward pro residues. Residues 160 to 350 (PAGDGGIIAI…ASLLEITGAS (191 aa)) form the CheB-type methylesterase domain. Active-site residues include serine 172, histidine 199, and aspartate 292.

The protein belongs to the CheB family. Post-translationally, phosphorylated by CheA. Phosphorylation of the N-terminal regulatory domain activates the methylesterase activity.

The protein localises to the cytoplasm. It catalyses the reaction [protein]-L-glutamate 5-O-methyl ester + H2O = L-glutamyl-[protein] + methanol + H(+). It carries out the reaction L-glutaminyl-[protein] + H2O = L-glutamyl-[protein] + NH4(+). Its function is as follows. Involved in chemotaxis. Part of a chemotaxis signal transduction system that modulates chemotaxis in response to various stimuli. Catalyzes the demethylation of specific methylglutamate residues introduced into the chemoreceptors (methyl-accepting chemotaxis proteins or MCP) by CheR. Also mediates the irreversible deamidation of specific glutamine residues to glutamic acid. In Paramagnetospirillum magneticum (strain ATCC 700264 / AMB-1) (Magnetospirillum magneticum), this protein is Protein-glutamate methylesterase/protein-glutamine glutaminase 3.